Consider the following 447-residue polypeptide: Beclin-1 (447 aa).

A compositionally biased stretch (low complexity) spans P44–P53. Residues P44 to R71 are disordered. Positions T105–S124 match the BH3 motif. Positions D139–V266 form a coiled coil. An evolutionary conserved domain (ECD) region spans residues D242–K447. The segment at W422–K447 is required for membrane-association.

It belongs to the beclin family. In terms of assembly, component of the PI3K (PI3KC3/PI3K-III/class III phosphatidylinositol 3-kinase) complex. Post-translationally, may be proteolytically processed by caspases; the C-terminal fragment(s) may induce apoptosis.

It localises to the cytoplasm. The protein localises to the golgi apparatus. It is found in the trans-Golgi network membrane. The protein resides in the endosome membrane. Its subcellular location is the endoplasmic reticulum membrane. It localises to the mitochondrion membrane. The protein localises to the cytoplasmic vesicle. It is found in the autophagosome. Its function is as follows. Plays a central role in autophagy. Acts as core subunit of different PI3K complex forms that mediate formation of phosphatidylinositol 3-phosphate and are believed to play a role in multiple membrane trafficking pathways such as initiation of autophagosomes, maturation of autophagosomes and endocytosis. Involved in regulation of degradative endocytic trafficking and required for the abscission step in cytokinesis, probably in the context of PI3KC3-C2. The sequence is that of Beclin-1 (BECN1) from Gallus gallus (Chicken).